A 336-amino-acid chain; its full sequence is Tetraacyldisaccharide 4'-kinase (336 aa).

ATP is bound at residue 60–67 (TIGGTGKT).

It belongs to the LpxK family.

It catalyses the reaction a lipid A disaccharide + ATP = a lipid IVA + ADP + H(+). It participates in glycolipid biosynthesis; lipid IV(A) biosynthesis; lipid IV(A) from (3R)-3-hydroxytetradecanoyl-[acyl-carrier-protein] and UDP-N-acetyl-alpha-D-glucosamine: step 6/6. Its function is as follows. Transfers the gamma-phosphate of ATP to the 4'-position of a tetraacyldisaccharide 1-phosphate intermediate (termed DS-1-P) to form tetraacyldisaccharide 1,4'-bis-phosphate (lipid IVA). In Pseudomonas putida (strain W619), this protein is Tetraacyldisaccharide 4'-kinase.